Here is an 86-residue protein sequence, read N- to C-terminus: Kappa-theraphotoxin-Cg1a 5 (86 aa).

The signal sequence occupies residues 1–21 (MKVSVLITLAVLGVMFVWTSA). The propeptide occupies 22-50 (AELEERGSDQRDSPAWLKSMERIFQSEER). 3 disulfides stabilise this stretch: Cys-52-Cys-66, Cys-59-Cys-71, and Cys-65-Cys-78. Phe-84 is subject to Phenylalanine amide.

This sequence belongs to the neurotoxin 10 (Hwtx-1) family. 28 (Jztx-11) subfamily. As to expression, expressed by the venom gland.

Its subcellular location is the secreted. In terms of biological role, this toxin acts as a voltage-dependent gating-modifier. It inhibits the sodium conductance (IC(50)=124 nM) and slows the fast inactivation (EC(50)=1180 nM) of Nav1.5/SCN5A. It significantly shifts the activation to more depolarized voltages and decreases the deactivation of Nav1.5 currents upon extreme depolarization, but only slightly affects voltage-dependence of steady-state inactivation. In addition, this toxin causes an approximately five-fold decrease in the rate of recovery from inactivation and an approximately 1.9-fold reduction in the closed-state inactivation rate. This toxin integrates the functions of site 3 toxins (alpha-scorpion toxins) with site 4 toxins (beta-scorpion and spider toxins) by targeting multiple sites on Nav1.5. Also shows inhibition of voltage-gated potassium channels (5 uM completely inhibits Kv2.1/KCNB1, whereas 5 uM moderately inhibits Kv4.2/KCND2 Kv4.1/KCND1 channels). This is Kappa-theraphotoxin-Cg1a 5 from Chilobrachys guangxiensis (Chinese earth tiger tarantula).